The primary structure comprises 131 residues: Ribosome-binding factor A (131 aa).

This sequence belongs to the RbfA family. As to quaternary structure, monomer. Binds 30S ribosomal subunits, but not 50S ribosomal subunits or 70S ribosomes.

The protein localises to the cytoplasm. Functionally, one of several proteins that assist in the late maturation steps of the functional core of the 30S ribosomal subunit. Associates with free 30S ribosomal subunits (but not with 30S subunits that are part of 70S ribosomes or polysomes). Required for efficient processing of 16S rRNA. May interact with the 5'-terminal helix region of 16S rRNA. The protein is Ribosome-binding factor A of Thermotoga petrophila (strain ATCC BAA-488 / DSM 13995 / JCM 10881 / RKU-1).